The chain runs to 93 residues: Small ribosomal subunit protein uS19 (93 aa).

Positions 72–93 (GEFSPTRTYRGHNKKDKKMQKK) are disordered. Residues 80–93 (YRGHNKKDKKMQKK) are compositionally biased toward basic residues.

It belongs to the universal ribosomal protein uS19 family.

Its function is as follows. Protein S19 forms a complex with S13 that binds strongly to the 16S ribosomal RNA. The sequence is that of Small ribosomal subunit protein uS19 from Aster yellows witches'-broom phytoplasma (strain AYWB).